We begin with the raw amino-acid sequence, 156 residues long: Dynein 16 kDa light chain, flagellar outer arm (156 aa).

The Thioredoxin domain maps to 2-116; the sequence is AAGLPPVQYS…LNQQVLSLTP (115 aa). Cys-37 and Cys-40 are joined by a disulfide.

As to quaternary structure, consists of at least 3 heavy chains (alpha, beta and gamma), 2 intermediate chains and 8 light chains.

Its subcellular location is the cell projection. The protein localises to the cilium. It is found in the flagellum. The protein resides in the cytoplasm. It localises to the cytoskeleton. Its subcellular location is the flagellum axoneme. Its function is as follows. May be involved in regulating the redox state of functionally important thiol groups within dynein. This chain is Dynein 16 kDa light chain, flagellar outer arm, found in Chlamydomonas reinhardtii (Chlamydomonas smithii).